The following is a 347-amino-acid chain: Phosphoribosylformylglycinamidine cyclo-ligase (347 aa).

It belongs to the AIR synthase family.

Its subcellular location is the cytoplasm. It carries out the reaction 2-formamido-N(1)-(5-O-phospho-beta-D-ribosyl)acetamidine + ATP = 5-amino-1-(5-phospho-beta-D-ribosyl)imidazole + ADP + phosphate + H(+). It functions in the pathway purine metabolism; IMP biosynthesis via de novo pathway; 5-amino-1-(5-phospho-D-ribosyl)imidazole from N(2)-formyl-N(1)-(5-phospho-D-ribosyl)glycinamide: step 2/2. This Prochlorococcus marinus (strain MIT 9301) protein is Phosphoribosylformylglycinamidine cyclo-ligase.